A 376-amino-acid polypeptide reads, in one-letter code: Heat-inducible transcription repressor HrcA (376 aa).

This sequence belongs to the HrcA family.

Negative regulator of class I heat shock genes (grpE-dnaK-dnaJ and groELS operons). Prevents heat-shock induction of these operons. The protein is Heat-inducible transcription repressor HrcA of Nostoc punctiforme (strain ATCC 29133 / PCC 73102).